A 734-amino-acid chain; its full sequence is DNA replication licensing factor MCM5 (734 aa).

An N-acetylserine modification is found at serine 2. Positions isoleucine 331 to isoleucine 537 constitute an MCM domain. ADP is bound at residue arginine 371. N6-acetyllysine is present on residues lysine 392 and lysine 396. The Arginine finger motif lies at serine 512–aspartate 515. A Phosphoserine modification is found at serine 605.

It belongs to the MCM family. Component of the MCM2-7 complex. The complex forms a toroidal hexameric ring with the proposed subunit order MCM2-MCM6-MCM4-MCM7-MCM3-MCM5. Component of the CMG helicase complex, a hexameric ring of related MCM2-7 subunits stabilized by CDC45 and the tetrameric GINS complex. Interacts with ANKRD17. Interacts with MCMBP. Interacts with TONSL; the interaction is direct.

It is found in the nucleus. It localises to the chromosome. The protein resides in the cytoplasm. Its subcellular location is the cytosol. The enzyme catalyses ATP + H2O = ADP + phosphate + H(+). Acts as a component of the MCM2-7 complex (MCM complex) which is the replicative helicase essential for 'once per cell cycle' DNA replication initiation and elongation in eukaryotic cells. Core component of CDC45-MCM-GINS (CMG) helicase, the molecular machine that unwinds template DNA during replication, and around which the replisome is built. The active ATPase sites in the MCM2-7 ring are formed through the interaction surfaces of two neighboring subunits such that a critical structure of a conserved arginine finger motif is provided in trans relative to the ATP-binding site of the Walker A box of the adjacent subunit. The six ATPase active sites, however, are likely to contribute differentially to the complex helicase activity. The chain is DNA replication licensing factor MCM5 from Bos taurus (Bovine).